A 127-amino-acid polypeptide reads, in one-letter code: CST complex subunit TEN1 (127 aa).

The protein belongs to the TEN1 family. In terms of assembly, component of the CST complex, composed of CTC1, TEN1 and STN1. Interacts with STN1. No interaction with POT1A, but competes with it for STN1 binding. Ubiquitous. High expression in meristematic tissues and in vasculature.

Its subcellular location is the nucleus. It localises to the chromosome. The protein localises to the telomere. Its function is as follows. Required for the maintenance of meristems and stem cells through the reduction of DNA damage. Promotes telomere integrity by maintaining telomere length and proper architecture of the chromosome terminus. Negatively regulates telomerase repeat addition processivity. Hampers contacts between enzymatically active telomerase and CST complex. The chain is CST complex subunit TEN1 from Arabidopsis thaliana (Mouse-ear cress).